The chain runs to 285 residues: Large ribosomal subunit protein uL2 (285 aa).

Residues 215–285 are disordered; sequence GRSRHKGIRP…IIRNRKGEQY (71 aa). Positions 256-272 are enriched in basic residues; it reads WGKRHMGVKTRNMKKHS.

The protein belongs to the universal ribosomal protein uL2 family. As to quaternary structure, part of the 50S ribosomal subunit. Forms a bridge to the 30S subunit in the 70S ribosome.

In terms of biological role, one of the primary rRNA binding proteins. Required for association of the 30S and 50S subunits to form the 70S ribosome, for tRNA binding and peptide bond formation. It has been suggested to have peptidyltransferase activity; this is somewhat controversial. Makes several contacts with the 16S rRNA in the 70S ribosome. The chain is Large ribosomal subunit protein uL2 from Mycoplasma genitalium (strain ATCC 33530 / DSM 19775 / NCTC 10195 / G37) (Mycoplasmoides genitalium).